Here is a 322-residue protein sequence, read N- to C-terminus: Methionyl-tRNA formyltransferase (322 aa).

Residue 113–116 (SLLP) coordinates (6S)-5,6,7,8-tetrahydrofolate.

The protein belongs to the Fmt family.

The enzyme catalyses L-methionyl-tRNA(fMet) + (6R)-10-formyltetrahydrofolate = N-formyl-L-methionyl-tRNA(fMet) + (6S)-5,6,7,8-tetrahydrofolate + H(+). In terms of biological role, attaches a formyl group to the free amino group of methionyl-tRNA(fMet). The formyl group appears to play a dual role in the initiator identity of N-formylmethionyl-tRNA by promoting its recognition by IF2 and preventing the misappropriation of this tRNA by the elongation apparatus. The protein is Methionyl-tRNA formyltransferase of Blochmanniella pennsylvanica (strain BPEN).